Here is a 258-residue protein sequence, read N- to C-terminus: 5'-nucleotidase SurE (258 aa).

Residues D14, D15, S45, and N101 each coordinate a divalent metal cation.

Belongs to the SurE nucleotidase family. It depends on a divalent metal cation as a cofactor.

The protein localises to the cytoplasm. It catalyses the reaction a ribonucleoside 5'-phosphate + H2O = a ribonucleoside + phosphate. Nucleotidase that shows phosphatase activity on nucleoside 5'-monophosphates. The polypeptide is 5'-nucleotidase SurE (Chlorobium phaeobacteroides (strain DSM 266 / SMG 266 / 2430)).